A 337-amino-acid polypeptide reads, in one-letter code: Holliday junction branch migration complex subunit RuvB (337 aa).

Residues 1-179 are large ATPase domain (RuvB-L); sequence MTHQVSVLHQ…FSFSGRVSYY (179 aa). Residues leucine 18, arginine 19, glycine 60, lysine 63, threonine 64, serine 65, 126–128, arginine 169, tyrosine 179, and arginine 216 each bind ATP; that span reads EDY. Mg(2+) is bound at residue threonine 64. Residues 180-250 are small ATPAse domain (RuvB-S); it reads SDEDLATILK…VAEKALSMLL (71 aa). The head domain (RuvB-H) stretch occupies residues 253–337; that stretch reads DWGLNEIDIK…DNLQILGEEK (85 aa). DNA-binding residues include lysine 308 and arginine 313.

The protein belongs to the RuvB family. As to quaternary structure, homohexamer. Forms an RuvA(8)-RuvB(12)-Holliday junction (HJ) complex. HJ DNA is sandwiched between 2 RuvA tetramers; dsDNA enters through RuvA and exits via RuvB. An RuvB hexamer assembles on each DNA strand where it exits the tetramer. Each RuvB hexamer is contacted by two RuvA subunits (via domain III) on 2 adjacent RuvB subunits; this complex drives branch migration. In the full resolvosome a probable DNA-RuvA(4)-RuvB(12)-RuvC(2) complex forms which resolves the HJ.

It localises to the cytoplasm. The catalysed reaction is ATP + H2O = ADP + phosphate + H(+). In terms of biological role, the RuvA-RuvB-RuvC complex processes Holliday junction (HJ) DNA during genetic recombination and DNA repair, while the RuvA-RuvB complex plays an important role in the rescue of blocked DNA replication forks via replication fork reversal (RFR). RuvA specifically binds to HJ cruciform DNA, conferring on it an open structure. The RuvB hexamer acts as an ATP-dependent pump, pulling dsDNA into and through the RuvAB complex. RuvB forms 2 homohexamers on either side of HJ DNA bound by 1 or 2 RuvA tetramers; 4 subunits per hexamer contact DNA at a time. Coordinated motions by a converter formed by DNA-disengaged RuvB subunits stimulates ATP hydrolysis and nucleotide exchange. Immobilization of the converter enables RuvB to convert the ATP-contained energy into a lever motion, pulling 2 nucleotides of DNA out of the RuvA tetramer per ATP hydrolyzed, thus driving DNA branch migration. The RuvB motors rotate together with the DNA substrate, which together with the progressing nucleotide cycle form the mechanistic basis for DNA recombination by continuous HJ branch migration. Branch migration allows RuvC to scan DNA until it finds its consensus sequence, where it cleaves and resolves cruciform DNA. The chain is Holliday junction branch migration complex subunit RuvB from Chlamydia felis (strain Fe/C-56) (Chlamydophila felis).